A 356-amino-acid polypeptide reads, in one-letter code: Probable butyrate kinase (356 aa).

Belongs to the acetokinase family.

It is found in the cytoplasm. It catalyses the reaction butanoate + ATP = butanoyl phosphate + ADP. The polypeptide is Probable butyrate kinase (Coprothermobacter proteolyticus (strain ATCC 35245 / DSM 5265 / OCM 4 / BT)).